Here is a 458-residue protein sequence, read N- to C-terminus: ATP synthase subunit beta (458 aa).

Gly-148–Thr-155 contributes to the ATP binding site.

Belongs to the ATPase alpha/beta chains family. F-type ATPases have 2 components, CF(1) - the catalytic core - and CF(0) - the membrane proton channel. CF(1) has five subunits: alpha(3), beta(3), gamma(1), delta(1), epsilon(1). CF(0) has three main subunits: a(1), b(2) and c(9-12). The alpha and beta chains form an alternating ring which encloses part of the gamma chain. CF(1) is attached to CF(0) by a central stalk formed by the gamma and epsilon chains, while a peripheral stalk is formed by the delta and b chains.

Its subcellular location is the cell inner membrane. It catalyses the reaction ATP + H2O + 4 H(+)(in) = ADP + phosphate + 5 H(+)(out). Produces ATP from ADP in the presence of a proton gradient across the membrane. The catalytic sites are hosted primarily by the beta subunits. The chain is ATP synthase subunit beta from Mannheimia succiniciproducens (strain KCTC 0769BP / MBEL55E).